Reading from the N-terminus, the 447-residue chain is Gastrin/cholecystokinin type B receptor (447 aa).

Residues 1–57 (MELLKLNRSVQGTGPGPGASLCRPGAPLLNSSSVGNLSCEPPRIRGAGTRELELAIR) are Extracellular-facing. N-linked (GlcNAc...) asparagine glycosylation is found at Asn-7, Asn-30, and Asn-36. A helical transmembrane segment spans residues 58–79 (ITLYAVIFLMSVGGNMLIIVVL). The Cytoplasmic segment spans residues 80–87 (GLSRRLRT). Residues 88 to 109 (VTNAFLLSLAVSDLLLAVACMP) form a helical membrane-spanning segment. At 110–131 (FTLLPNLMGTFIFGTVICKAVS) the chain is on the extracellular side. The cysteines at positions 127 and 205 are disulfide-linked. Residues 132–150 (YLMGVSVSVSTLSLVAIAL) traverse the membrane as a helical segment. Residues 151–170 (ERYSAICRPLQARVWQTRSH) are Cytoplasmic-facing. Residues 171–189 (AARVIVATWLLSGLLMVPY) traverse the membrane as a helical segment. The Extracellular portion of the chain corresponds to 190–219 (PVYTVVQPVGPRVLQCVHRWPSARVRQTWS). Residues 220–242 (VLLLLLLFFIPGVVMAVAYGLIS) form a helical membrane-spanning segment. Topologically, residues 243–333 (RELYLGLRFD…KLLAKKRVVR (91 aa)) are cytoplasmic. Positions 258–285 (DSQSRVRNQGGLPGAVHQNGRCRPETGA) are disordered. A helical transmembrane segment spans residues 334 to 355 (MLLVIVVLFFLCWLPVYSANTW). Residues 356 to 373 (RAFDGPGAHRALSGAPIS) are Extracellular-facing. A helical transmembrane segment spans residues 374-394 (FIHLLSYASACVNPLVYCFMH). The Cytoplasmic portion of the chain corresponds to 395 to 447 (RRFRQACLETCARCCPRPPRARPRALPDEDPPTPSIASLSRLSYTTISTLGPG). A lipid anchor (S-palmitoyl cysteine) is attached at Cys-408.

It belongs to the G-protein coupled receptor 1 family. As to expression, isoform 1 is expressed in brain, pancreas, stomach, the colon cancer cell line LoVo and the T-lymphoblastoma Jurkat, but not in heart, placenta, liver, lung, skeletal muscle, kidney or the stomach cancer cell line AGS. Expressed at high levels in the small cell lung cancer cell line NCI-H510, at lower levels in NCI-H345, NCI-H69 and GLC-28 cell lines, not expressed in GLC-19 cell line. Within the stomach, expressed at high levels in the mucosa of the gastric fundus and at low levels in the antrum and duodenum. Isoform 2 is present in pancreatic cancer cells and colorectal cancer cells, but not in normal pancreas or colonic mucosa. Isoform 3 is expressed in brain, pancreas, stomach, the stomach cancer cell line AGS and the colon cancer cell line LoVo.

Its subcellular location is the cell membrane. Its function is as follows. Receptor for gastrin and cholecystokinin. The CCK-B receptors occur throughout the central nervous system where they modulate anxiety, analgesia, arousal, and neuroleptic activity. This receptor mediates its action by association with G proteins that activate a phosphatidylinositol-calcium second messenger system. In terms of biological role, isoform 2 is constitutively activated and may regulate cancer cell proliferation via a gastrin-independent mechanism. This chain is Gastrin/cholecystokinin type B receptor, found in Homo sapiens (Human).